Reading from the N-terminus, the 273-residue chain is Formamidopyrimidine-DNA glycosylase (273 aa).

Catalysis depends on proline 2, which acts as the Schiff-base intermediate with DNA. Residue glutamate 3 is the Proton donor of the active site. Lysine 58 (proton donor; for beta-elimination activity) is an active-site residue. Histidine 91, arginine 109, and arginine 154 together coordinate DNA. The segment at 239–273 (FVYARTGEPCRICNAPVRQIVQGQRSTFYCPNCQK) adopts an FPG-type zinc-finger fold. Residue arginine 263 is the Proton donor; for delta-elimination activity of the active site.

This sequence belongs to the FPG family. Monomer. The cofactor is Zn(2+).

The catalysed reaction is Hydrolysis of DNA containing ring-opened 7-methylguanine residues, releasing 2,6-diamino-4-hydroxy-5-(N-methyl)formamidopyrimidine.. It carries out the reaction 2'-deoxyribonucleotide-(2'-deoxyribose 5'-phosphate)-2'-deoxyribonucleotide-DNA = a 3'-end 2'-deoxyribonucleotide-(2,3-dehydro-2,3-deoxyribose 5'-phosphate)-DNA + a 5'-end 5'-phospho-2'-deoxyribonucleoside-DNA + H(+). Involved in base excision repair of DNA damaged by oxidation or by mutagenic agents. Acts as a DNA glycosylase that recognizes and removes damaged bases. Has a preference for oxidized purines, such as 7,8-dihydro-8-oxoguanine (8-oxoG). Has AP (apurinic/apyrimidinic) lyase activity and introduces nicks in the DNA strand. Cleaves the DNA backbone by beta-delta elimination to generate a single-strand break at the site of the removed base with both 3'- and 5'-phosphates. This Herminiimonas arsenicoxydans protein is Formamidopyrimidine-DNA glycosylase.